Here is a 347-residue protein sequence, read N- to C-terminus: Bifunctional dihydroflavonol 4-reductase/flavanone 4-reductase (347 aa).

Positions 44 and 163 each coordinate NADP(+).

This sequence belongs to the NAD(P)-dependent epimerase/dehydratase family. Dihydroflavonol-4-reductase subfamily.

The catalysed reaction is a (2R,3S,4S)-leucoanthocyanidin + NADP(+) = a (2R,3R)-dihydroflavonol + NADPH + H(+). It carries out the reaction (2S)-flavan-4-ol + NADP(+) = (2S)-flavanone + NADPH + H(+). Functionally, bifunctional enzyme involved in the flavonoid metabolism. May use dihydroquercetin, eriodictyol, garbanzol (5-deoxydihydrokaempferol), dihydrofisetin (5-deoxydihydroquercetin), dihydrokaempferol to a low extent (5%), but not naringenin, 5-deoxynaringenin or butin (5-deoxyeriodictyol) as substrate. In Pyrus communis (Pear), this protein is Bifunctional dihydroflavonol 4-reductase/flavanone 4-reductase (DFR).